We begin with the raw amino-acid sequence, 387 residues long: Chaperone protein DnaJ (387 aa).

A J domain is found at 6–70 (DYYETLGVSR…QKRAAYDQYG (65 aa)). The segment at 143–225 (GKDTKISYDR…CHGTGHEQER (83 aa)) adopts a CR-type zinc-finger fold. Positions 156, 159, 173, 176, 199, 202, 213, and 216 each coordinate Zn(2+). 4 CXXCXGXG motif repeats span residues 156–163 (CHTCNGSG), 173–180 (CHKCHGSG), 199–206 (CDVCGGTG), and 213–220 (CPTCHGTG).

It belongs to the DnaJ family. Homodimer. Zn(2+) serves as cofactor.

The protein resides in the cytoplasm. Functionally, participates actively in the response to hyperosmotic and heat shock by preventing the aggregation of stress-denatured proteins and by disaggregating proteins, also in an autonomous, DnaK-independent fashion. Unfolded proteins bind initially to DnaJ; upon interaction with the DnaJ-bound protein, DnaK hydrolyzes its bound ATP, resulting in the formation of a stable complex. GrpE releases ADP from DnaK; ATP binding to DnaK triggers the release of the substrate protein, thus completing the reaction cycle. Several rounds of ATP-dependent interactions between DnaJ, DnaK and GrpE are required for fully efficient folding. Also involved, together with DnaK and GrpE, in the DNA replication of plasmids through activation of initiation proteins. The polypeptide is Chaperone protein DnaJ (Lacticaseibacillus paracasei (strain ATCC 334 / BCRC 17002 / CCUG 31169 / CIP 107868 / KCTC 3260 / NRRL B-441) (Lactobacillus paracasei)).